The primary structure comprises 38 residues: Photosystem II reaction center protein Y (38 aa).

Residues 2–20 (ILIVLLPILLAATWAFINI) traverse the membrane as a helical segment.

The protein belongs to the PsbY family. PSII is composed of 1 copy each of membrane proteins PsbA, PsbB, PsbC, PsbD, PsbE, PsbF, PsbH, PsbI, PsbJ, PsbK, PsbL, PsbM, PsbT, PsbX, PsbY, Psb30/Ycf12, peripheral proteins PsbO, CyanoQ (PsbQ), PsbU, PsbV and a large number of cofactors. It forms dimeric complexes.

The protein resides in the cellular thylakoid membrane. Loosely associated component of the core of photosystem II (PSII), it is not always seen in crystals. PSII is a light-driven water plastoquinone oxidoreductase, using light energy to abstract electrons from H(2)O, generating a proton gradient subsequently used for ATP formation. The protein is Photosystem II reaction center protein Y of Prochlorococcus marinus (strain MIT 9313).